The primary structure comprises 555 residues: Steroid-22-oyl-CoA synthetase (555 aa).

This sequence belongs to the ATP-dependent AMP-binding enzyme family.

It carries out the reaction 3-oxochol-4-en-22-oate + ATP + CoA = 3-oxochol-4-en-22-oyl-CoA + AMP + diphosphate. The catalysed reaction is 3-hydroxy-9-oxo-9,10-seco-chola-1,3,5-trien-22-oate + ATP + CoA = 3-hydroxy-9-oxo-9,10-seco-chola-1,3,5-trien-22-oyl-CoA + AMP + diphosphate. The protein operates within steroid metabolism. Involved in cholate catabolism. Catalyzes the ATP-dependent formation of CoA thioesters of steroids with isopropanoyl side chains, likely occurring as degradation intermediates. Can use 4-BNC, HSBNC and HIDP as substrate. This chain is Steroid-22-oyl-CoA synthetase, found in Rhodococcus jostii (strain RHA1).